A 703-amino-acid polypeptide reads, in one-letter code: FERM domain-containing protein 7 (703 aa).

The FERM domain maps to 2 to 282; it reads LHLKVQFLDD…EYHAFFRLSE (281 aa). Residues 525–552 adopt a coiled-coil conformation; it reads RNMRIKSLQQDLQELQEAMARTSGRSNI.

In the developing cerebral cortex, strong expression is observed in the ventricular and intermediate zones at 13 and 17 dpc. At 17 dpc and P0, expression appears to be restricted to the cortical plate. In neonates, highly expressed in cortex, hippocampus, cerebellum, olfactory bulb and eye with little or no expression in liver, kidney, skeletal muscle or heart muscle (at protein level).

Its subcellular location is the cell projection. The protein resides in the neuron projection. It is found in the growth cone. Functionally, plays a role in neurite development, may be through the activation of the GTPase RAC1. Plays a role in the control of eye movement and gaze stability. The chain is FERM domain-containing protein 7 from Mus musculus (Mouse).